Here is a 225-residue protein sequence, read N- to C-terminus: Red fluorescent protein drFP583 (225 aa).

The 2-iminomethyl-5-imidazolinone (Gln-Gly) cross-link spans 66–68 (QYG). Tyr-67 carries the post-translational modification (Z)-2,3-didehydrotyrosine.

This sequence belongs to the GFP family. In terms of assembly, homotetramer. Contains a chromophore consisting of modified amino acid residues. The chromophore is formed by autocatalytic backbone condensation between Xaa-N and Gly-(N+2), oxidation of Tyr-(N+1) to didehydrotyrosine, and formation of a double bond to the alpha-amino nitrogen of residue Xaa-N. Maturation of the chromophore requires nothing other than molecular oxygen.

In terms of biological role, thought to play a role in photoprotection of the coral's resident symbiont microalgae's photosystems from photoinhibition caused by high light levels found near the surface of coral reefs. In deeper water, the fluorescence may be to convert blue light into longer wavelengths more suitable for use in photosynthesis by the microalgal symbionts. The sequence is that of Red fluorescent protein drFP583 from Discosoma sp. (Sea anemone).